Reading from the N-terminus, the 668-residue chain is Exoribonuclease 2 (668 aa).

An RNB domain is found at 193 to 521 (RIEMTHVPFV…INHRMLKAVI (329 aa)). The S1 motif domain maps to 568-650 (QTCFTGEIFD…ENRSLVAKPT (83 aa)).

The protein belongs to the RNR ribonuclease family. RNase II subfamily.

It localises to the cytoplasm. It carries out the reaction Exonucleolytic cleavage in the 3'- to 5'-direction to yield nucleoside 5'-phosphates.. Its function is as follows. Involved in mRNA degradation. Hydrolyzes single-stranded polyribonucleotides processively in the 3' to 5' direction. The polypeptide is Exoribonuclease 2 (Vibrio parahaemolyticus serotype O3:K6 (strain RIMD 2210633)).